Here is a 409-residue protein sequence, read N- to C-terminus: Elongation factor Tu (409 aa).

The tr-type G domain maps to 10–214 (KPHVNIGTIG…AVDSYIPTPE (205 aa)). The G1 stretch occupies residues 19 to 26 (GHVDHGKT). 19 to 26 (GHVDHGKT) contacts GTP. Residue threonine 26 participates in Mg(2+) binding. Residues 60–64 (GITIN) are G2. The segment at 81-84 (DCPG) is G3. Residues 81 to 85 (DCPGH) and 136 to 139 (NKVD) contribute to the GTP site. The tract at residues 136–139 (NKVD) is G4. Positions 174 to 176 (SGL) are G5.

This sequence belongs to the TRAFAC class translation factor GTPase superfamily. Classic translation factor GTPase family. EF-Tu/EF-1A subfamily. In terms of assembly, monomer.

It is found in the cytoplasm. It catalyses the reaction GTP + H2O = GDP + phosphate + H(+). GTP hydrolase that promotes the GTP-dependent binding of aminoacyl-tRNA to the A-site of ribosomes during protein biosynthesis. The chain is Elongation factor Tu from Cyanothece sp. (strain PCC 7425 / ATCC 29141).